The primary structure comprises 159 residues: C-type lectin 1 (159 aa).

A signal peptide spans 1–23 (MGRFIFISFGLLVVFFFLSGAKG). 4 cysteine pairs are disulfide-bonded: C26-C37, C54-C155, C61-C157, and C130-C147. Residues 33–156 (MYGLCYKIFD…CKVKNAFLCQ (124 aa)) form the C-type lectin domain. Residue N118 is glycosylated (N-linked (GlcNAc...) asparagine). The Sugar-binding motif lies at 119–121 (LTD). Residues D121, D127, and N143 each contribute to the Ca(2+) site.

It belongs to the true venom lectin family. As to quaternary structure, homodimer; disulfide-linked. In terms of tissue distribution, expressed by the venom gland.

The protein resides in the secreted. Lectin which recognizes specific carbohydrate structures and agglutinates a variety of animal cells by binding to cell-surface glycoproteins and glycolipids. May be a calcium-dependent lectin. This is C-type lectin 1 from Bitis gabonica (Gaboon adder).